The sequence spans 464 residues: 26S proteasome regulatory subunit 7 homolog B (464 aa).

Residue 246–253 (GPPGSGKT) participates in ATP binding. Lysine 452 is covalently cross-linked (Glycyl lysine isopeptide (Lys-Gly) (interchain with G-Cter in ubiquitin)).

It belongs to the AAA ATPase family. As to quaternary structure, component of the 19S regulatory particle (RP/PA700) base subcomplex of the 26S proteasome. The 26S proteasome is composed of a core protease (CP), known as the 20S proteasome, capped at one or both ends by the 19S regulatory particle (RP/PA700). The RP/PA700 complex is composed of at least 17 different subunits in two subcomplexes, the base and the lid, which form the portions proximal and distal to the 20S proteolytic core, respectively.

The protein resides in the cytoplasm. It is found in the nucleus. In terms of biological role, the 26S proteasome is involved in the ATP-dependent degradation of ubiquitinated proteins. The regulatory (or ATPase) complex confers ATP dependency and substrate specificity to the 26S complex. The protein is 26S proteasome regulatory subunit 7 homolog B (RPT1B) of Arabidopsis thaliana (Mouse-ear cress).